We begin with the raw amino-acid sequence, 329 residues long: NAC domain-containing protein 79 (329 aa).

The region spanning 17 to 167 is the NAC domain; sequence LPPGFRFHPT…EWVICRVFHK (151 aa). Residues 114–173 mediate DNA binding; that stretch reads VGMKKTLVFYRGRAPKGQKTNWVMHEYRLDGKLSAHNLPKTAKNEWVICRVFHKTAGGKK.

In terms of tissue distribution, expressed at low levels in leaves.

It is found in the nucleus. This Arabidopsis thaliana (Mouse-ear cress) protein is NAC domain-containing protein 79.